Consider the following 215-residue polypeptide: MSIIGSFPPGGPRVEVQETRVQTDRVLTIPNILSMARLAGVPLFLWLILRPEFGGPQSDGWALLVLALSGVSDYLDGKLARRWNQISSLGRLLDPAADRLYILSTLVGLTWREILPLWLTLVLLAREAMLLVMVGILRRHGYPPPQVNFLGKAATFNLMYAFPLLLLSDGSGWIASLAAVFGWAFAGWGTTLYWWAGVLYVVQVRRLVRADVAAD.

5 helical membrane passes run 29-49 (IPNI…WLIL), 60-80 (GWAL…GKLA), 117-137 (LWLT…VGIL), 158-178 (LMYA…ASLA), and 179-199 (AVFG…AGVL).

Belongs to the CDP-alcohol phosphatidyltransferase class-I family. The cofactor is a divalent metal cation.

The protein resides in the cell membrane. The catalysed reaction is a CDP-1,2-diacyl-sn-glycerol + a 1,2-diacyl-sn-glycero-3-phospho-(1'-sn-glycerol) = a cardiolipin + CMP + H(+). In terms of biological role, catalyzes the synthesis of cardiolipin (CL) (diphosphatidylglycerol) by specifically transferring a phosphatidyl group from CDP-diacylglycerol to phosphatidylglycerol (PG). The polypeptide is Cardiolipin synthase (CMP-forming) (Streptomyces coelicolor (strain ATCC BAA-471 / A3(2) / M145)).